A 149-amino-acid polypeptide reads, in one-letter code: Hydrogenase expression/formation protein HupT (149 aa).

Belongs to the HupJ family.

In Azotobacter chroococcum mcd 1, this protein is Hydrogenase expression/formation protein HupT (hupT).